The sequence spans 384 residues: F-box only protein 5-B (384 aa).

Disordered regions lie at residues 1 to 20 and 79 to 106; these read MMCG…KSSA and DEEN…ETDS. Residues 9–19 are compositionally biased toward low complexity; that stretch reads PSPKKLLSKSS. The segment covering 83 to 99 has biased composition (polar residues); sequence SSLQDSGYSSILQNDSP. An F-box domain is found at 191–238; the sequence is AELFHRDFKHLLTKILRHLNAMDLINVIGVSTTWRKILQKDNWAYNTY. A ZBR-type zinc finger spans residues 311-359; it reads SLKACVDCGSPAKYDSYLHRAICTRESCKLDFCTLCSCKYHSSKSCLIS. Zn(2+) contacts are provided by Cys-315, Cys-318, Cys-333, Cys-338, Cys-343, Cys-346, His-351, and Cys-356.

As to quaternary structure, part of a SCF (SKP1-cullin-F-box) protein ligase complex. Interacts with btrc. Interacts with skp1. Interacts with cdc20. Interacts with pin1; stabilizes fbxo5 by preventing its association with btrc in an isomerization-dependent pathway; this interaction is present during G2 phase and prevents fbxo5 degradation. Interacts with plk1. Post-translationally, proteolysed; proteolysis is induced by both cyclin B-cdk1 and cyclin A-cdk1/2 complex through probable phosphorylation. Proteolysis is inhibited by pin1 during G2.

It localises to the nucleus. It is found in the cytoplasm. The protein resides in the cytoskeleton. Its subcellular location is the spindle. The protein localises to the microtubule organizing center. It localises to the centrosome. The protein operates within protein modification; protein ubiquitination. Functionally, regulates progression through early mitosis by inhibiting the anaphase promoting complex/cyclosome (APC). Binds to the APC activators cdc20 to prevent APC activation. Can also bind directly to the APC to inhibit substrate-binding. Required to arrest unfertilized eggs at metaphase of meiosis II, by preventing their release from metaphase of meiosis II, through inhibition of APC-dependent cyclin B destruction leading to stabilization of cyclin B-cdk1 complex activity. The sequence is that of F-box only protein 5-B (fbxo5-b) from Xenopus laevis (African clawed frog).